A 162-amino-acid polypeptide reads, in one-letter code: Protein-export protein SecB (162 aa).

It belongs to the SecB family. In terms of assembly, homotetramer, a dimer of dimers. One homotetramer interacts with 1 SecA dimer.

The protein resides in the cytoplasm. In terms of biological role, one of the proteins required for the normal export of preproteins out of the cell cytoplasm. It is a molecular chaperone that binds to a subset of precursor proteins, maintaining them in a translocation-competent state. It also specifically binds to its receptor SecA. This chain is Protein-export protein SecB, found in Pseudomonas syringae pv. syringae (strain B728a).